Consider the following 828-residue polypeptide: Periplasmic nitrate reductase (828 aa).

The tat-type signal signal peptide spans 1–31; the sequence is MKLSRRSFMKANAVAAAAAAAGLSVPGVARA. Positions 39–95 constitute a 4Fe-4S Mo/W bis-MGD-type domain; it reads IKWDKAPCRFCGTGCGVLVGTQQGRVVACQGDPDAPVNRGLNCIKGYFLPKIMYGKD. Positions 46, 49, 53, and 81 each coordinate [4Fe-4S] cluster. Mo-bis(molybdopterin guanine dinucleotide)-binding positions include K83, Q150, N175, C179, 212-219, 243-247, 262-264, M372, Q376, N482, 508-509, K531, D558, and 718-727; these read WGANMAEM, STYQH, QSD, SD, and TGRVLEHWHT. F794 contributes to the substrate binding site. 2 residues coordinate Mo-bis(molybdopterin guanine dinucleotide): N802 and K819.

The protein belongs to the prokaryotic molybdopterin-containing oxidoreductase family. NasA/NapA/NarB subfamily. Component of the periplasmic nitrate reductase NapAB complex composed of NapA and NapB. [4Fe-4S] cluster is required as a cofactor. Mo-bis(molybdopterin guanine dinucleotide) serves as cofactor. Predicted to be exported by the Tat system. The position of the signal peptide cleavage has not been experimentally proven.

Its subcellular location is the periplasm. The enzyme catalyses 2 Fe(II)-[cytochrome] + nitrate + 2 H(+) = 2 Fe(III)-[cytochrome] + nitrite + H2O. Its function is as follows. Catalytic subunit of the periplasmic nitrate reductase complex NapAB. Receives electrons from NapB and catalyzes the reduction of nitrate to nitrite. The polypeptide is Periplasmic nitrate reductase (Escherichia coli O8 (strain IAI1)).